We begin with the raw amino-acid sequence, 412 residues long: Protein translocase subunit SecY (412 aa).

A run of 9 helical transmembrane segments spans residues 17–37 (IFLT…PVPG), 58–78 (IFSG…VPYI), 117–137 (ALGW…PYVF), 143–163 (FVVQ…WFSE), 170–190 (IGNG…PKLI), 251–271 (VMPI…GQVI), 293–313 (YLIF…SLII), 350–370 (TFLG…IENI), and 372–392 (SIST…GVAI).

Belongs to the SecY/SEC61-alpha family. Component of the plastid Sec protein translocase complex, which is composed of at least SecY and SecE.

It localises to the plastid. The protein resides in the chloroplast thylakoid membrane. In terms of biological role, the central subunit of the protein translocation channel SecYE. Consists of two halves formed by TMs 1-5 and 6-10. These two domains form a lateral gate at the front which open onto the bilayer between TMs 2 and 7, and are clamped together by SecE at the back. The channel is closed by both a pore ring composed of hydrophobic SecY resides and a short helix (helix 2A) on the extracellular side of the membrane which forms a plug. The protein is Protein translocase subunit SecY of Pyrenomonas salina.